Here is a 156-residue protein sequence, read N- to C-terminus: MSRKGPSKKHVVLPDPIYGSTVVAQLINKILLDGKKSIAEDIVYSALDMVKEKSDQEPVAVLKRALDNIRPSLEVRSRRVGGATYQVPVEVKPNRANTLSLRWLTDFSRARREKTMAERLANEILDASNGLGASVKRREDTHKMAEANKAFAHYRW.

The protein belongs to the universal ribosomal protein uS7 family. In terms of assembly, part of the 30S ribosomal subunit. Contacts proteins S9 and S11.

One of the primary rRNA binding proteins, it binds directly to 16S rRNA where it nucleates assembly of the head domain of the 30S subunit. Is located at the subunit interface close to the decoding center, probably blocks exit of the E-site tRNA. This Bifidobacterium longum (strain NCC 2705) protein is Small ribosomal subunit protein uS7.